Reading from the N-terminus, the 198-residue chain is Probable GTP-binding protein EngB (198 aa).

Residues 36-198 enclose the EngB-type G domain; the sequence is SDPQFAFIGR…NLSKLQELLE (163 aa). GTP-binding positions include 44 to 51, 70 to 74, 88 to 91, 155 to 158, and 182 to 184; these read GRSNVGKS, GRTQL, DLPG, NKID, and ISA. S51 and T72 together coordinate Mg(2+).

The protein belongs to the TRAFAC class TrmE-Era-EngA-EngB-Septin-like GTPase superfamily. EngB GTPase family. Requires Mg(2+) as cofactor.

Functionally, necessary for normal cell division and for the maintenance of normal septation. The chain is Probable GTP-binding protein EngB from Mesomycoplasma hyopneumoniae (strain 7448) (Mycoplasma hyopneumoniae).